A 150-amino-acid chain; its full sequence is Seminal ribonuclease (150 aa).

The first 26 residues, 1–26, serve as a signal peptide directing secretion; the sequence is MALKSLVVLPLLVLVLLLVRVQPSLG. Residues Lys-33 and Arg-36 each contribute to the substrate site. Catalysis depends on His-38, which acts as the Proton acceptor. Disulfide bonds link Cys-52/Cys-110, Cys-66/Cys-121, Cys-84/Cys-136, and Cys-91/Cys-98. Substrate is bound by residues 67 to 71 and Lys-92; that span reads KPVNT. Asn-93 carries the deamidated asparagine; by deterioration modification. Arg-111 contacts substrate. His-145 serves as the catalytic Proton donor.

This sequence belongs to the pancreatic ribonuclease family. Homodimer; disulfide-linked. Seminal plasma. Can reach 3% of the protein content of this fluid.

It is found in the secreted. It catalyses the reaction an [RNA] containing cytidine + H2O = an [RNA]-3'-cytidine-3'-phosphate + a 5'-hydroxy-ribonucleotide-3'-[RNA].. It carries out the reaction an [RNA] containing uridine + H2O = an [RNA]-3'-uridine-3'-phosphate + a 5'-hydroxy-ribonucleotide-3'-[RNA].. Allosteric regulation by both substrate and reaction products. In terms of biological role, this enzyme hydrolyzes both single- and double-stranded RNA. In Bos taurus (Bovine), this protein is Seminal ribonuclease (SRN).